The following is a 1836-amino-acid chain: Sodium channel protein type 4 subunit alpha (1836 aa).

Over 1–131 (MARPSLCTLV…RGAIKVLIHA (131 aa)) the chain is Cytoplasmic. Residues 39–60 (LQRNKQMEIEEPERKPRSDLEA) are compositionally biased toward basic and acidic residues. A disordered region spans residues 39 to 63 (LQRNKQMEIEEPERKPRSDLEAGKN). The I repeat unit spans residues 113-454 (LLSPFSVVRR…VVAMAYAEQN (342 aa)). The chain crosses the membrane as a helical span at residues 132-150 (LFSMFIMITILTNCVFMTM). Residues 151–157 (SDPPPWS) lie on the Extracellular side of the membrane. Residues 158 to 178 (KNVEYTFTGIYTFESLIKILA) traverse the membrane as a helical segment. Over 179–192 (RGFCVDDFTFLRDP) the chain is Cytoplasmic. A helical membrane pass occupies residues 193–210 (WNWLDFSVIMMAYLTEFV). Residues 211–216 (DLGNIS) are Extracellular-facing. N214 is a glycosylation site (N-linked (GlcNAc...) asparagine). A helical transmembrane segment spans residues 217-233 (ALRTFRVLRALKTITVI). Residues 234–252 (PGLKTIVGALIQSVKKLSD) are Cytoplasmic-facing. A helical transmembrane segment spans residues 253–272 (VMILTVFCLSVFALVGLQLF). The Extracellular segment spans residues 273–391 (MGNLRQKCVR…PNYGYTSYDT (119 aa)). An intrachain disulfide couples C280 to C360. 8 N-linked (GlcNAc...) asparagine glycosylation sites follow: N288, N291, N297, N303, N315, N321, N333, and N362. C369 and C375 are disulfide-bonded. An intramembrane region (pore-forming) is located at residues 392-416 (FSWAFLALFRLMTQDYWENLFQLTL). At 417–423 (RAAGKTY) the chain is on the extracellular side. A helical membrane pass occupies residues 424–444 (MIFFVVIIFLGSFYLINLILA). Over 445-578 (VVAMAYAEQN…NIIHLIVMDP (134 aa)) the chain is Cytoplasmic. A disordered region spans residues 493–530 (GGEADGDPAHGKDCNGSLDTSQGEKGAPRQSSSGDSGI). A compositionally biased stretch (polar residues) spans 509 to 528 (SLDTSQGEKGAPRQSSSGDS). An II repeat occupies 560 to 832 (CCAPWLKFKN…QIAIGRIKLG (273 aa)). The chain crosses the membrane as a helical span at residues 579–597 (FVDLGITICIVLNTLFMAM). At 598–608 (EHYPMTEHFDN) the chain is on the extracellular side. A helical membrane pass occupies residues 609 to 628 (VLTVGNLVFTGIFTAEMVLK). At 629–642 (LIAMDPYEYFQQGW) the chain is on the cytoplasmic side. The helical transmembrane segment at 643–662 (NIFDSIIVTLSLVELGLANV) threads the bilayer. Over 663–664 (QG) the chain is Extracellular. A helical membrane pass occupies residues 665–682 (LSVLRSFRLLRVFKLAKS). At 683 to 698 (WPTLNMLIKIIGNSVG) the chain is on the cytoplasmic side. A helical transmembrane segment spans residues 699 to 717 (ALGNLTLVLAIIVFIFAVV). At 718-746 (GMQLFGKSYKECVCKIALDCNLPRWHMHD) the chain is on the extracellular side. C731 and C737 are disulfide-bonded. The pore-forming intramembrane region spans 747-767 (FFHSFLIVFRILCGEWIETMW). Residues 768–778 (DCMEVAGQAMC) lie on the Extracellular side of the membrane. A disulfide bridge links C769 with C778. The helical transmembrane segment at 779 to 797 (LTVFLMVMVIGNLVVLNLF) threads the bilayer. The Cytoplasmic portion of the chain corresponds to 798–1032 (LALLLSSFSA…ACFKIVEHNW (235 aa)). Disordered stretches follow at residues 863 to 885 (GAGE…PPEE) and 930 to 992 (ESDL…QPEE). A compositionally biased stretch (basic and acidic residues) spans 876–885 (EDEKKEPPEE). Acidic residues-rich tracts occupy residues 930–947 (ESDL…FSEP) and 975–992 (EDPE…QPEE). One copy of the III repeat lies at 1013–1326 (RGKKWWTLRR…KKYYNAMKKL (314 aa)). Residues 1033–1050 (FETFIVFMILLSSGALAF) form a helical membrane-spanning segment. At 1051 to 1063 (EDIYIEQRRVIRT) the chain is on the extracellular side. A helical transmembrane segment spans residues 1064–1082 (ILEYADKVFTYIFIMEMLL). The Cytoplasmic segment spans residues 1083-1096 (KWVAYGFKVYFTNA). A helical membrane pass occupies residues 1097–1115 (WCWLDFLIVDVSIISLVAN). The Extracellular portion of the chain corresponds to 1116-1123 (WLGYSELG). A helical membrane pass occupies residues 1124–1142 (PIKSLRTLRALRPLRALSR). The Cytoplasmic segment spans residues 1143-1159 (FEGMRVVVNALLGAIPS). The chain crosses the membrane as a helical span at residues 1160-1179 (IMNVLLVCLIFWLIFSIMGV). Topologically, residues 1180–1230 (NLFAGKFYYCINTTTSERFDISEVNNKSECESLMHTGQVRWLNVKVNYDNV) are extracellular. C1189 and C1209 are disulfide-bonded. N-linked (GlcNAc...) asparagine glycosylation is found at N1191 and N1205. The segment at residues 1231–1252 (GLGYLSLLQVATFKGWMDIMYA) is an intramembrane region (pore-forming). At 1253–1269 (AVDSREKEEQPQYEVNL) the chain is on the extracellular side. A helical membrane pass occupies residues 1270–1291 (YMYLYFVIFIIFGSFFTLNLFI). Topologically, residues 1292–1354 (GVIIDNFNQQ…MVYDLVTKQA (63 aa)) are cytoplasmic. The segment at 1310-1312 (IFM) is important for rapid channel inactivation. An IV repeat occupies 1335–1633 (IPRPQNKIQG…WEKFDPDATQ (299 aa)). The chain crosses the membrane as a helical span at residues 1355–1372 (FDITIMILICLNMVTMMV). Over 1373–1383 (ETDNQSQLKVD) the chain is Extracellular. A helical membrane pass occupies residues 1384 to 1402 (ILYNINMIFIIIFTGECVL). At 1403–1414 (KMLALRQYYFTV) the chain is on the cytoplasmic side. The helical transmembrane segment at 1415–1432 (GWNIFDFVVVILSIVGLA) threads the bilayer. Residues 1433–1445 (LSDLIQKYFVSPT) are Extracellular-facing. A helical transmembrane segment spans residues 1446-1462 (LFRVIRLARIGRVLRLI). Residues 1463-1481 (RGAKGIRTLLFALMMSLPA) are Cytoplasmic-facing. A helical transmembrane segment spans residues 1482 to 1499 (LFNIGLLLFLVMFIYSIF). Over 1500–1521 (GMSNFAYVKKESGIDDMFNFET) the chain is Extracellular. An intramembrane region (pore-forming) is located at residues 1522 to 1544 (FGNSIICLFEITTSAGWDGLLNP). Over 1545 to 1574 (ILNSGPPDCDPNLENPGTSVKGDCGNPSIG) the chain is Extracellular. A disulfide bridge links C1553 with C1568. Residues 1575 to 1597 (ICFFCSYIIISFLIVVNMYIAII) form a helical membrane-spanning segment. Residues 1598–1836 (LENFNVATEE…VRPGVKESLV (239 aa)) lie on the Cytoplasmic side of the membrane. The IQ domain maps to 1727-1756 (EEVCAIKIQRAYRRHLLQRSMKQASYMYRH). The interval 1778-1836 (KMYGHENGNSSSPSPEEKGEAGDAGPTMGLMPISPSDTAWPPAPPPGQTVRPGVKESLV) is disordered.

The protein belongs to the sodium channel (TC 1.A.1.10) family. Nav1.4/SCN4A subfamily. The Nav1.4 voltage-gated sodium channel consists of an ion-conducting alpha subunit SCN4A which is functional on its own and a regulatory beta subunit SCN1B. SCN1B strongly enhances the presence of SCN4A at the cell surface. SCN1B is also required for rapid channel inactivation and recovery after inactivation. It prevents the decrease of channel activity in response to repetitive, high-frequency depolarizations. Interacts with the syntrophins SNTA1, SNTB1 and SNTB2 (via PDZ domain); probably links SCN4A to the actin cytoskeleton and the extracellular matrix via the dystrophin-associated protein complex and regulates its localization in muscle cells. Interacts with TMEM233; probable regulator of the channel.

It localises to the cell membrane. It catalyses the reaction Na(+)(in) = Na(+)(out). With respect to regulation, the channel is inhibited by tetrodotoxin and saxitoxin. Inhibited by the conotoxin GVIIJ. Functionally, pore-forming subunit of Nav1.4, a voltage-gated sodium (Nav) channel that directly mediates the depolarizing phase of action potentials in excitable membranes. Navs, also called VGSCs (voltage-gated sodium channels) or VDSCs (voltage-dependent sodium channels), operate by switching between closed and open conformations depending on the voltage difference across the membrane. In the open conformation they allow Na(+) ions to selectively pass through the pore, along their electrochemical gradient. The influx of Na+ ions provokes membrane depolarization, initiating the propagation of electrical signals throughout cells and tissues. Highly expressed in skeletal muscles, Nav1.4 generates the action potential crucial for muscle contraction. This chain is Sodium channel protein type 4 subunit alpha, found in Homo sapiens (Human).